The sequence spans 171 residues: Small ribosomal subunit protein uS5 (171 aa).

The region spanning 15 to 78 (LKDRLVAINR…EAAKKNLTRV (64 aa)) is the S5 DRBM domain.

This sequence belongs to the universal ribosomal protein uS5 family. In terms of assembly, part of the 30S ribosomal subunit. Contacts proteins S4 and S8.

In terms of biological role, with S4 and S12 plays an important role in translational accuracy. Located at the back of the 30S subunit body where it stabilizes the conformation of the head with respect to the body. This is Small ribosomal subunit protein uS5 from Phocaeicola vulgatus (strain ATCC 8482 / DSM 1447 / JCM 5826 / CCUG 4940 / NBRC 14291 / NCTC 11154) (Bacteroides vulgatus).